We begin with the raw amino-acid sequence, 248 residues long: Triosephosphate isomerase (248 aa).

Residue 9–11 (NWK) participates in substrate binding. His-93 functions as the Electrophile in the catalytic mechanism. Catalysis depends on Glu-163, which acts as the Proton acceptor. Substrate is bound by residues Gly-169, Ser-208, and 229 to 230 (GG).

The protein belongs to the triosephosphate isomerase family. In terms of assembly, homodimer.

The protein localises to the cytoplasm. The catalysed reaction is D-glyceraldehyde 3-phosphate = dihydroxyacetone phosphate. Its pathway is carbohydrate biosynthesis; gluconeogenesis. It functions in the pathway carbohydrate degradation; glycolysis; D-glyceraldehyde 3-phosphate from glycerone phosphate: step 1/1. In terms of biological role, involved in the gluconeogenesis. Catalyzes stereospecifically the conversion of dihydroxyacetone phosphate (DHAP) to D-glyceraldehyde-3-phosphate (G3P). The sequence is that of Triosephosphate isomerase from Jannaschia sp. (strain CCS1).